We begin with the raw amino-acid sequence, 270 residues long: Co-chaperone protein DjlA (270 aa).

Over 1 to 6 (MQYWGK) the chain is Periplasmic. Residues 7-31 (IIGVAVALMMGGGFWGVVLGLLVGH) form a helical membrane-spanning segment. Over 32 to 270 (MFDKARSRKM…ELIKEQKGFK (239 aa)) the chain is Cytoplasmic. A J domain is found at 204–270 (DACNVLGVKT…ELIKEQKGFK (67 aa)).

Homodimer.

Its subcellular location is the cell inner membrane. In terms of biological role, regulatory DnaK co-chaperone. Direct interaction between DnaK and DjlA is needed for the induction of the wcaABCDE operon, involved in the synthesis of a colanic acid polysaccharide capsule, possibly through activation of the RcsB/RcsC phosphotransfer signaling pathway. The colanic acid capsule may help the bacterium survive conditions outside the host. The protein is Co-chaperone protein DjlA of Salmonella paratyphi A (strain ATCC 9150 / SARB42).